Reading from the N-terminus, the 119-residue chain is Large ribosomal subunit protein uL18 (119 aa).

Belongs to the universal ribosomal protein uL18 family. In terms of assembly, part of the 50S ribosomal subunit; part of the 5S rRNA/L5/L18/L25 subcomplex. Contacts the 5S and 23S rRNAs.

Functionally, this is one of the proteins that bind and probably mediate the attachment of the 5S RNA into the large ribosomal subunit, where it forms part of the central protuberance. In Nitrosomonas europaea (strain ATCC 19718 / CIP 103999 / KCTC 2705 / NBRC 14298), this protein is Large ribosomal subunit protein uL18.